We begin with the raw amino-acid sequence, 490 residues long: Probable cytosol aminopeptidase (490 aa).

Mn(2+) contacts are provided by lysine 262 and aspartate 267. Residue lysine 274 is part of the active site. The Mn(2+) site is built by aspartate 285, aspartate 344, and glutamate 346. Arginine 348 is an active-site residue.

This sequence belongs to the peptidase M17 family. Mn(2+) is required as a cofactor.

It localises to the cytoplasm. The enzyme catalyses Release of an N-terminal amino acid, Xaa-|-Yaa-, in which Xaa is preferably Leu, but may be other amino acids including Pro although not Arg or Lys, and Yaa may be Pro. Amino acid amides and methyl esters are also readily hydrolyzed, but rates on arylamides are exceedingly low.. It catalyses the reaction Release of an N-terminal amino acid, preferentially leucine, but not glutamic or aspartic acids.. Presumably involved in the processing and regular turnover of intracellular proteins. Catalyzes the removal of unsubstituted N-terminal amino acids from various peptides. The protein is Probable cytosol aminopeptidase of Xanthomonas oryzae pv. oryzae (strain MAFF 311018).